Reading from the N-terminus, the 331-residue chain is UPF0324 membrane protein SACOL0411 (331 aa).

11 helical membrane-spanning segments follow: residues 9 to 26, 31 to 48, 69 to 88, 93 to 115, 122 to 144, 154 to 176, 183 to 202, 217 to 234, 247 to 269, 273 to 295, and 308 to 330; these read FMIG…SFLA, ILDK…AILY, LLRF…DIIG, LLAI…NKLL, ALLL…APIF, SIGI…YAIF, YGAW…LAGG, LGRV…ILIM, ISIP…VTIP, LNIL…GLNV, and LMTI…HWLY.

The protein belongs to the UPF0324 family.

It is found in the cell membrane. In Staphylococcus aureus (strain COL), this protein is UPF0324 membrane protein SACOL0411.